The chain runs to 114 residues: uncharacterized protein (114 aa).

Residues 13–30 (LYISAAGIASIYVVKTIV) form a helical membrane-spanning segment.

The protein resides in the mitochondrion outer membrane. This is an uncharacterized protein from Saccharomyces cerevisiae (strain ATCC 204508 / S288c) (Baker's yeast).